An 89-amino-acid chain; its full sequence is Large ribosomal subunit protein bL27 (89 aa).

Residues 1 to 22 (MAHKKAGGSSRNGRDSESKRLG) are disordered.

It belongs to the bacterial ribosomal protein bL27 family.

The polypeptide is Large ribosomal subunit protein bL27 (Bartonella henselae (strain ATCC 49882 / DSM 28221 / CCUG 30454 / Houston 1) (Rochalimaea henselae)).